A 196-amino-acid chain; its full sequence is Heat shock protein beta-8 (196 aa).

The interval 1-28 is disordered; sequence MADGQLPFPCSYPSRLRRDPFRDSPLSS. Phosphoserine is present on residues Ser24 and Ser57. Thr63 bears the Phosphothreonine mark. An asymmetric dimethylarginine mark is found at Arg71 and Arg78. The sHSP domain occupies 78–185; that stretch reads RFGVPAEGRS…PFGESSFNNE (108 aa). The residue at position 87 (Ser87) is a Phosphoserine. The disordered stretch occupies residues 176-196; it reads PFGESSFNNELPQDNQEVTCS. Residues 178–196 are compositionally biased toward polar residues; sequence GESSFNNELPQDNQEVTCS.

This sequence belongs to the small heat shock protein (HSP20) family. In terms of assembly, monomer. Forms a ternary complex with BAG3 and HSPA1A. Component of the chaperone-assisted selective autophagy (CASA) complex consisting of BAG3, HSPA8/HSC70, HSPB8 and STUB1/CHIP. Interacts with HSPB1. Interacts with DNAJB6. Interacts with BAG3. Highly expressed in skeletal muscle, heart, uterus, liver, lung and ovary. Low levels found in stomach and brain. Not detected in small intestine, large intestine, kidney, spleen and testis. In the ovary, expression is concentrated in the endometrium and in the connective tissue between the circular and longitudinal muscles of the myometrium.

The protein resides in the cytoplasm. It localises to the nucleus. Functionally, involved in the chaperone-assisted selective autophagy (CASA), a crucial process for protein quality control, particularly in mechanical strained cells and tissues such as muscle. Displays temperature-dependent chaperone activity. This chain is Heat shock protein beta-8 (Hspb8), found in Mus musculus (Mouse).